A 113-amino-acid chain; its full sequence is Putative membrane protein insertion efficiency factor (113 aa).

It belongs to the UPF0161 family.

It localises to the cell inner membrane. Functionally, could be involved in insertion of integral membrane proteins into the membrane. In Campylobacter jejuni subsp. jejuni serotype O:2 (strain ATCC 700819 / NCTC 11168), this protein is Putative membrane protein insertion efficiency factor.